A 135-amino-acid polypeptide reads, in one-letter code: uncharacterized protein (135 aa).

An HTH hxlR-type domain is found at 25–123; sequence CPIQHVVDLL…LGSDWLEQES (99 aa).

This is an uncharacterized protein from Synechocystis sp. (strain ATCC 27184 / PCC 6803 / Kazusa).